The primary structure comprises 503 residues: Maturase K (503 aa).

It belongs to the intron maturase 2 family. MatK subfamily.

It is found in the plastid. Its subcellular location is the chloroplast. In terms of biological role, usually encoded in the trnK tRNA gene intron. Probably assists in splicing its own and other chloroplast group II introns. The protein is Maturase K of Eucalyptus globulus (Tasmanian blue gum).